The primary structure comprises 1088 residues: RNA-directed RNA polymerase (1088 aa).

The RdRp catalytic domain maps to leucine 501–isoleucine 687.

This sequence belongs to the reoviridae RNA-directed RNA polymerase family. As to quaternary structure, interacts with VP3 (Potential). Interacts with VP2; this interaction activates VP1. Interacts with NSP5; this interaction is probably necessary for the formation of functional virus factories. Interacts with NSP2; this interaction is weak. The cofactor is Mg(2+).

The protein resides in the virion. It carries out the reaction RNA(n) + a ribonucleoside 5'-triphosphate = RNA(n+1) + diphosphate. RNA-directed RNA polymerase that is involved in both transcription and genome replication. Together with VP3 capping enzyme, forms an enzyme complex positioned near the channels situated at each of the five-fold vertices of the core. Following infection, the outermost layer of the virus is lost, leaving a double-layered particle (DLP) made up of the core and VP6 shell. VP1 then catalyzes the transcription of fully conservative plus-strand genomic RNAs that are extruded through the DLP's channels into the cytoplasm where they function as mRNAs for translation of viral proteins. One copy of each of the viral (+)RNAs is also recruited during core assembly, together with newly synthesized polymerase complexes and VP2. The polymerase of these novo-formed particles catalyzes the synthesis of complementary minus-strands leading to dsRNA formation. To do so, the polymerase specifically recognizes and binds 4 bases 5'-UGUG-3' in the conserved 3'-sequence of plus-strand RNA templates. VP2 presumably activates the autoinhibited VP1-RNA complex to coordinate packaging and genome replication. Once dsRNA synthesis is complete, the polymerase switches to the transcriptional mode, thus providing secondary transcription. This Macaca mulatta (Rhesus macaque) protein is RNA-directed RNA polymerase.